The following is a 261-amino-acid chain: MAPTPWISFTTDYGLADGFVAACHGVLARLTPTTRVIDVTHLVPPGDVRRGAAVLAQAVPYLPAAVHLAVVDPGVGTARRAIALAAGDGLLVGPDNGLLLDAAAALGGVRAAVELTNRDWLGADVSATFHGRDIFAPVAARLALGAPLADAGPAVEPSTLVRLPVPLVRPEADGFTAEVLTVDHFGNVQLAASGSLLEPLPRSLRVERQPAVRVHTFGDVAPGELLVHVDSTGQVAVAVNGGRAADLLGVTPGDRLRVTAG.

3 residues coordinate adenosine: aspartate 12, aspartate 72, and asparagine 187. Positions 187, 231, and 239 each coordinate (R)-S-adenosyl-L-methionine. Valine 239 is an adenosine binding site.

It belongs to the SAM hydrolase / SAM-dependent halogenase family.

It catalyses the reaction (R)-S-adenosyl-L-methionine + H2O = adenosine + L-methionine + H(+). Specifically hydrolyzes (R)-S-adenosyl-L-methionine ((R)-SAM), the inactive form of the ubiquitous cofactor SAM, into adenosine and L-methionine. Is stereoselective as it cannot use the active form of SAM, (S)-S-adenosyl-L-methionine, as substrate. Likely plays a role in preventing accumulation of (R)-S-adenosyl-L-methionine in cells; maintenance of (S)-S-denosyl-L-methionine homochirality is important for cellular health given that the (R)-form is largely inactive as a methyl donor and can function as an inhibitor of methyltransferases. This is (R)-S-adenosyl-L-methionine hydrolase from Salinispora tropica (strain ATCC BAA-916 / DSM 44818 / JCM 13857 / NBRC 105044 / CNB-440).